The chain runs to 357 residues: DNA polymerase IV (357 aa).

In terms of domain architecture, UmuC spans 4-185 (IIHCDCDCFY…LPVERLFGVG (182 aa)). Mg(2+)-binding residues include Asp-8 and Asp-103. The active site involves Glu-104.

This sequence belongs to the DNA polymerase type-Y family. In terms of assembly, monomer. Mg(2+) is required as a cofactor.

Its subcellular location is the cytoplasm. The enzyme catalyses DNA(n) + a 2'-deoxyribonucleoside 5'-triphosphate = DNA(n+1) + diphosphate. Poorly processive, error-prone DNA polymerase involved in untargeted mutagenesis. Copies undamaged DNA at stalled replication forks, which arise in vivo from mismatched or misaligned primer ends. These misaligned primers can be extended by PolIV. Exhibits no 3'-5' exonuclease (proofreading) activity. May be involved in translesional synthesis, in conjunction with the beta clamp from PolIII. In Ralstonia nicotianae (strain ATCC BAA-1114 / GMI1000) (Ralstonia solanacearum), this protein is DNA polymerase IV.